A 256-amino-acid polypeptide reads, in one-letter code: Protein YABBY 4 (256 aa).

The segment at 30–57 (CNCCDTILAVGVPCSSLFKTVTVRCGHC) adopts a C4-type zinc-finger fold. The segment at 127–168 (SCASNAPAMQMPPAKPVQQEPELPKNAPASANRPPEKRQRVP) is disordered.

Belongs to the YABBY family. In terms of tissue distribution, preferentially expressed in immature organs containing meristems and organ primordia. Expressed in phloem of developing vascular tissues of young seedling shoots. Expressed in the phloem of midvein vasculature of young leaves. Does not show polar expression pattern in leaf primordia.

It is found in the nucleus. In terms of biological role, seems to be associated with phloem cell differentiation. This Oryza sativa subsp. japonica (Rice) protein is Protein YABBY 4 (YAB4).